Reading from the N-terminus, the 475-residue chain is MSSGRIVQIIGAVIDVEFNRTDVPQVYDALVVDGTDTTLEVQQQLGDGVVRTIAMGSTEGLKRGLPVTNTGAPITVPVGEATLGRIMDVLGRPIDEQGPVNSEDKWSIHRQAPSYDEQANSTDLLETGIKVIDLLCPFAKGGKVGLFGGAGVGKTVNMMELINNIALKHSGLSVFAGVGERTREGNDFYHEMQEAGVVDVENFTNSKVAMVYGQMNEPPGNRLRVALTGLTMAEYFRDQKDENGKGKDVLLFVDNIYRYTLAGTEVSALLGRMPSAVGYQPTLAEEMGVLQERITSTQTGSITSIQAVYVPADDLTDPSPATTFAHLDATVVLSRDIASQGIYPAIDPLDSTSRQLDPLVIGEEHYNVARGVQEVLQRYKELKDIIAILGMDELSEDDKMVVYRARKIQRFLSQPFHVAEVFTGAPGKYVTLRETISSFRDILDGKYDNLPEQAFYMAGGIDEVVAKAEKMKSAA.

Gly-148 to Thr-155 provides a ligand contact to ATP.

It belongs to the ATPase alpha/beta chains family. In terms of assembly, F-type ATPases have 2 components, CF(1) - the catalytic core - and CF(0) - the membrane proton channel. CF(1) has five subunits: alpha(3), beta(3), gamma(1), delta(1), epsilon(1). CF(0) has three main subunits: a(1), b(2) and c(9-12). The alpha and beta chains form an alternating ring which encloses part of the gamma chain. CF(1) is attached to CF(0) by a central stalk formed by the gamma and epsilon chains, while a peripheral stalk is formed by the delta and b chains.

The protein resides in the cell inner membrane. The catalysed reaction is ATP + H2O + 4 H(+)(in) = ADP + phosphate + 5 H(+)(out). In terms of biological role, produces ATP from ADP in the presence of a proton gradient across the membrane. The catalytic sites are hosted primarily by the beta subunits. The polypeptide is ATP synthase subunit beta (Psychrobacter sp. (strain PRwf-1)).